Reading from the N-terminus, the 500-residue chain is Glycerol kinase (500 aa).

Threonine 13 contributes to the ADP binding site. ATP contacts are provided by threonine 13, threonine 14, and serine 15. Residue threonine 13 participates in sn-glycerol 3-phosphate binding. Arginine 17 serves as a coordination point for ADP. Sn-glycerol 3-phosphate is bound by residues arginine 83, glutamate 84, tyrosine 135, and aspartate 244. Glycerol is bound by residues arginine 83, glutamate 84, tyrosine 135, aspartate 244, and glutamine 245. The ADP site is built by threonine 266 and glycine 309. Residues threonine 266, glycine 309, glutamine 313, and glycine 410 each coordinate ATP. ADP contacts are provided by glycine 410 and asparagine 414.

The protein belongs to the FGGY kinase family.

It carries out the reaction glycerol + ATP = sn-glycerol 3-phosphate + ADP + H(+). It participates in polyol metabolism; glycerol degradation via glycerol kinase pathway; sn-glycerol 3-phosphate from glycerol: step 1/1. Its activity is regulated as follows. Inhibited by fructose 1,6-bisphosphate (FBP). In terms of biological role, key enzyme in the regulation of glycerol uptake and metabolism. Catalyzes the phosphorylation of glycerol to yield sn-glycerol 3-phosphate. The sequence is that of Glycerol kinase from Burkholderia vietnamiensis (strain G4 / LMG 22486) (Burkholderia cepacia (strain R1808)).